The primary structure comprises 211 residues: Protein-L-isoaspartate O-methyltransferase 2 (211 aa).

S61 is a catalytic residue.

Belongs to the methyltransferase superfamily. L-isoaspartyl/D-aspartyl protein methyltransferase family.

It is found in the cytoplasm. It catalyses the reaction [protein]-L-isoaspartate + S-adenosyl-L-methionine = [protein]-L-isoaspartate alpha-methyl ester + S-adenosyl-L-homocysteine. In terms of biological role, catalyzes the methyl esterification of L-isoaspartyl residues in peptides and proteins that result from spontaneous decomposition of normal L-aspartyl and L-asparaginyl residues. It plays a role in the repair and/or degradation of damaged proteins. The sequence is that of Protein-L-isoaspartate O-methyltransferase 2 from Polaromonas sp. (strain JS666 / ATCC BAA-500).